The sequence spans 218 residues: Histone chaperone ASF1B (218 aa).

It belongs to the ASF1 family. As to quaternary structure, interacts with histone H3 and histone H4. Interacts strongly with the N-terminus of TOUSLED. Phosphorylated in vitro by TOUSLED.

It localises to the nucleus. Its function is as follows. Histone chaperone that facilitates histone deposition and histone exchange and removal during nucleosome assembly and disassembly. This Arabidopsis thaliana (Mouse-ear cress) protein is Histone chaperone ASF1B (ASF1B).